The chain runs to 709 residues: D-(-)-3-hydroxybutyrate oligomer hydrolase (709 aa).

A signal peptide spans 1–26 (MTVFKTAPLLIAALAASSCGGGGSGA). A disordered region spans residues 58 to 77 (GLGRSGLQDDSPPGYAGSQP). The active-site Charge relay system is the S305.

It belongs to the D-(-)-3-hydroxybutyrate oligomer hydrolase family.

The protein resides in the secreted. It catalyses the reaction (3R)-hydroxybutanoate dimer + H2O = 2 (R)-3-hydroxybutanoate + H(+). The protein operates within lipid metabolism; butanoate metabolism. Its function is as follows. Participates in the degradation of poly-3-hydroxybutyrate (PHB). It works downstream of poly(3-hydroxybutyrate) depolymerase, hydrolyzing D(-)-3-hydroxybutyrate oligomers of various length (3HB-oligomers) into 3HB-monomers. The chain is D-(-)-3-hydroxybutyrate oligomer hydrolase from Paracidovorax citrulli (strain AAC00-1) (Acidovorax citrulli).